The chain runs to 106 residues: UPF0213 protein VPA1222 (106 aa).

Residues 7 to 82 form the GIY-YIG domain; the sequence is QHWSVYLIRN…KQLTKSKKEQ (76 aa).

This sequence belongs to the UPF0213 family.

In Vibrio parahaemolyticus serotype O3:K6 (strain RIMD 2210633), this protein is UPF0213 protein VPA1222.